Consider the following 165-residue polypeptide: Ribosome maturation factor RimM (165 aa).

Residues Glu94–Ala165 enclose the PRC barrel domain.

It belongs to the RimM family. In terms of assembly, binds ribosomal protein uS19.

The protein localises to the cytoplasm. In terms of biological role, an accessory protein needed during the final step in the assembly of 30S ribosomal subunit, possibly for assembly of the head region. Essential for efficient processing of 16S rRNA. May be needed both before and after RbfA during the maturation of 16S rRNA. It has affinity for free ribosomal 30S subunits but not for 70S ribosomes. The protein is Ribosome maturation factor RimM of Rickettsia conorii (strain ATCC VR-613 / Malish 7).